Reading from the N-terminus, the 204-residue chain is 8-oxoguanine DNA glycosylase/AP lyase (204 aa).

Residues K128 and D146 contribute to the active site.

It belongs to the type-2 OGG1 family.

The enzyme catalyses 2'-deoxyribonucleotide-(2'-deoxyribose 5'-phosphate)-2'-deoxyribonucleotide-DNA = a 3'-end 2'-deoxyribonucleotide-(2,3-dehydro-2,3-deoxyribose 5'-phosphate)-DNA + a 5'-end 5'-phospho-2'-deoxyribonucleoside-DNA + H(+). Catalyzes the excision of an oxidatively damaged form of guanine (7,8-dihydro-8-oxoguanine = 8-oxoG) from DNA. Also cleaves the DNA backbone at apurinic/apyrimidinic sites (AP sites). The sequence is that of 8-oxoguanine DNA glycosylase/AP lyase from Sulfurisphaera tokodaii (strain DSM 16993 / JCM 10545 / NBRC 100140 / 7) (Sulfolobus tokodaii).